The sequence spans 417 residues: Argininosuccinate synthase (417 aa).

Residue Ala-9–Ser-17 participates in ATP binding. An L-citrulline-binding site is contributed by Tyr-87. Gly-117 is a binding site for ATP. L-aspartate is bound by residues Thr-119, Asn-123, and Asp-124. Asn-123 provides a ligand contact to L-citrulline. 5 residues coordinate L-citrulline: Arg-127, Ser-175, Ser-184, Glu-260, and Tyr-272.

Belongs to the argininosuccinate synthase family. Type 1 subfamily. Homotetramer.

It is found in the cytoplasm. The catalysed reaction is L-citrulline + L-aspartate + ATP = 2-(N(omega)-L-arginino)succinate + AMP + diphosphate + H(+). It participates in amino-acid biosynthesis; L-arginine biosynthesis; L-arginine from L-ornithine and carbamoyl phosphate: step 2/3. This is Argininosuccinate synthase from Oceanobacillus iheyensis (strain DSM 14371 / CIP 107618 / JCM 11309 / KCTC 3954 / HTE831).